The sequence spans 445 residues: NAD-specific glutamate dehydrogenase (445 aa).

Lys-124 is a catalytic residue. 235–241 (GFGNVAW) serves as a coordination point for NAD(+).

This sequence belongs to the Glu/Leu/Phe/Val dehydrogenases family. In terms of assembly, homohexamer.

The catalysed reaction is L-glutamate + NAD(+) + H2O = 2-oxoglutarate + NH4(+) + NADH + H(+). This chain is NAD-specific glutamate dehydrogenase (gdhB), found in Bacteroides fragilis (strain YCH46).